The primary structure comprises 179 residues: Large ribosomal subunit protein uL5 (179 aa).

The protein belongs to the universal ribosomal protein uL5 family. As to quaternary structure, part of the 50S ribosomal subunit; part of the 5S rRNA/L5/L18/L25 subcomplex. Contacts the 5S rRNA and the P site tRNA. Forms a bridge to the 30S subunit in the 70S ribosome.

Functionally, this is one of the proteins that bind and probably mediate the attachment of the 5S RNA into the large ribosomal subunit, where it forms part of the central protuberance. In the 70S ribosome it contacts protein S13 of the 30S subunit (bridge B1b), connecting the 2 subunits; this bridge is implicated in subunit movement. Contacts the P site tRNA; the 5S rRNA and some of its associated proteins might help stabilize positioning of ribosome-bound tRNAs. This chain is Large ribosomal subunit protein uL5, found in Rickettsia typhi (strain ATCC VR-144 / Wilmington).